The chain runs to 169 residues: Putative phosphoesterase SSP1770 (169 aa).

The Proton donor role is filled by histidine 34. 2 consecutive short sequence motifs (HXTX) follow at residues 34-37 and 115-118; these read HITI and HFTI. Histidine 115 functions as the Proton acceptor in the catalytic mechanism.

Belongs to the 2H phosphoesterase superfamily. YjcG family.

This is Putative phosphoesterase SSP1770 from Staphylococcus saprophyticus subsp. saprophyticus (strain ATCC 15305 / DSM 20229 / NCIMB 8711 / NCTC 7292 / S-41).